Reading from the N-terminus, the 178-residue chain is Mediator of RNA polymerase II transcription subunit 28 (178 aa).

A disordered region spans residues 1–43 (MAASLGGMFAGQPPGPPPPPPGLPGQASLLQAAPGAPRPSNST). Pro residues predominate over residues 13–23 (PPGPPPPPPGL). Residues 109–145 (QVIKEDVSELRSELQRKDALVQKHLTKLRHWQQVLED) adopt a coiled-coil conformation.

This sequence belongs to the Mediator complex subunit 28 family. Forms a ternary complex with NF2/merlin and GRB2. Binds to actin. Component of the Mediator complex, which is probably composed of MED1, MED4, MED6, MED7, MED8, MED9, MED10, MED11, MED12, MED13, MED13L, MED14, MED15, MED16, MED17, MED18, MED19, MED20, MED21, MED22, MED23, MED24, MED25, MED26, MED27, MED29, MED30, MED31, CCNC, CDK8 and CDC2L6/CDK11. The MED12, MED13, CCNC and CDK8 subunits form a distinct module termed the CDK8 module. Mediator containing the CDK8 module is less active than Mediator lacking this module in supporting transcriptional activation. Individual preparations of the Mediator complex lacking one or more distinct subunits have been variously termed ARC, CRSP, DRIP, PC2, SMCC and TRAP.

Its subcellular location is the nucleus. It is found in the cytoplasm. The protein resides in the membrane. May be part of a complex containing NF2/merlin that participates in cellular signaling to the actin cytoskeleton downstream of tyrosine kinase signaling pathways. Component of the Mediator complex, a coactivator involved in the regulated transcription of nearly all RNA polymerase II-dependent genes. Mediator functions as a bridge to convey information from gene-specific regulatory proteins to the basal RNA polymerase II transcription machinery. Mediator is recruited to promoters by direct interactions with regulatory proteins and serves as a scaffold for the assembly of a functional preinitiation complex with RNA polymerase II and the general transcription factors. This Rattus norvegicus (Rat) protein is Mediator of RNA polymerase II transcription subunit 28 (Med28).